The primary structure comprises 198 residues: Recombination protein RecR (198 aa).

The C4-type zinc-finger motif lies at 56 to 71 (CKVCGNFSEEDECVIC). A Toprim domain is found at 79-174 (GVICVVEEPK…RVSKLASGLP (96 aa)).

This sequence belongs to the RecR family.

May play a role in DNA repair. It seems to be involved in an RecBC-independent recombinational process of DNA repair. It may act with RecF and RecO. This Tropheryma whipplei (strain TW08/27) (Whipple's bacillus) protein is Recombination protein RecR.